The sequence spans 478 residues: MSKKKKFVEAITPMDEDFAKWYTDIVKKAELVDYASVKGCMIIRPYGYAIWENIQKYLDTKFKETGHENVYMPMFIPESLLQKEKDHVEGFAPEVAWVTQGGNDTLAERLCVRPTSETLFCDHYAKIIQSHNDLPKKYNQWCSVVRWEKTTRPFLRTTEFLWQEGHTAHATAEESAKETIDMLNVYANFCENVLAIPVIKGQKTEKEKFAGAKATYTIESLMHDGKALQSGTSHNFGDNFSKAFNIQYNDKNSQLQYVHQTSWGVTTRLIGAIIMVHGDDSGLKLPPRIAPLQVVIVPIAQHKEGVLDKAEELRQRIAKVARVKVDSSDKMPGWKFNEYEMKGVPVRLEVGPKDIENNQVVLVRRDTREKIFVSMDELETKIPELLDEIHNSMLEHARTHRDEHTYTAKTLDEFKEIADTKPGFIKAMWCGDTACEEKLKEVAGVSSRCMPFEQEEITDKCICCGKEAKHMVYWGKAY.

It belongs to the class-II aminoacyl-tRNA synthetase family. ProS type 3 subfamily. In terms of assembly, homodimer.

It localises to the cytoplasm. The catalysed reaction is tRNA(Pro) + L-proline + ATP = L-prolyl-tRNA(Pro) + AMP + diphosphate. In terms of biological role, catalyzes the attachment of proline to tRNA(Pro) in a two-step reaction: proline is first activated by ATP to form Pro-AMP and then transferred to the acceptor end of tRNA(Pro). This Clostridium novyi (strain NT) protein is Proline--tRNA ligase.